The chain runs to 436 residues: AMSH-like protease (436 aa).

Met1 bears the N-acetylmethionine mark. Phosphoserine occurs at positions 25 and 242. Residues 269–397 enclose the MPN domain; sequence VVLPEDLCHK…IFRLTNAGML (129 aa). Zn(2+) contacts are provided by His347, His349, Asp360, His362, Cys402, His408, and His410. The JAMM motif signature appears at 347-360; it reads HTHPTQTAFLSSVD.

It belongs to the peptidase M67C family. Requires Zn(2+) as cofactor. As to expression, ubiquitously expressed.

Inhibited by UbV(SP.1), an ubiquitin variant that also inhibits STAMBP. In terms of biological role, zinc metalloprotease that specifically cleaves 'Lys-63'-linked polyubiquitin chains. Acts as a positive regulator of the TORC1 signaling pathway by mediating 'Lys-63'-linked deubiquitination of SESN2, thereby inhibiting SESN2-interaction with the GATOR2 complex. Does not cleave 'Lys-48'-linked polyubiquitin chains. The sequence is that of AMSH-like protease from Homo sapiens (Human).